A 479-amino-acid polypeptide reads, in one-letter code: Inhibitory synaptic factor 2A (479 aa).

Ser177 bears the Phosphoserine mark. 2 disordered regions span residues 226–247 (GRAK…ALRR) and 315–338 (SPEC…PSPT). Basic and acidic residues predominate over residues 228 to 237 (AKQDRGRPNS). Over residues 318–337 (CSEQPSQTHTPPGLGNQPSP) the composition is skewed to polar residues. The stretch at 353–379 (TEVVDLKAQLQMMENLISSSQETIKVL) forms a coiled coil. Positions 449-461 (SPYSQETYSSTPK) are enriched in polar residues. A disordered region spans residues 449-472 (SPYSQETYSSTPKQKSKTESKKHG).

The protein belongs to the INSYN2 family. Interacts with GPHN.

The protein localises to the postsynaptic density. Functionally, component of the protein machinery at the inhibitory synapses, probably acting as a scaffold. Inhibitory synapses dampen neuronal activity through postsynaptic hyperpolarization. This synaptic inhibition is fundamental for the functioning of the central nervous system, shaping and orchestrating the flow of information through neuronal networks to generate a precise neural code. The chain is Inhibitory synaptic factor 2A from Homo sapiens (Human).